Here is a 375-residue protein sequence, read N- to C-terminus: Peptide-N(4)-(N-acetyl-beta-glucosaminyl)asparagine amidase (375 aa).

Cys129, Cys132, Cys163, and Cys166 together coordinate Zn(2+). The active-site Nucleophile is Cys189. Active-site residues include His219 and Asp236. Substrate is bound at residue Glu239. The disordered stretch occupies residues Lys345–Glu375. Residues Glu364–Glu375 show a composition bias toward basic and acidic residues.

This sequence belongs to the transglutaminase-like superfamily. PNGase family. Zn(2+) serves as cofactor.

The protein localises to the cytoplasm. It carries out the reaction Hydrolysis of an N(4)-(acetyl-beta-D-glucosaminyl)asparagine residue in which the glucosamine residue may be further glycosylated, to yield a (substituted) N-acetyl-beta-D-glucosaminylamine and a peptide containing an aspartate residue.. Its function is as follows. Specifically deglycosylates the denatured form of N-linked glycoproteins in the cytoplasm and assists their proteasome-mediated degradation. Cleaves the beta-aspartyl-glucosamine (GlcNAc) of the glycan and the amide side chain of Asn, converting Asn to Asp. Prefers proteins containing high-mannose over those bearing complex type oligosaccharides. Can recognize misfolded proteins in the endoplasmic reticulum that are exported to the cytosol to be destroyed and deglycosylate them, while it has no activity toward native proteins. Deglycosylation is a prerequisite for subsequent proteasome-mediated degradation of some, but not all, misfolded glycoproteins. The protein is Peptide-N(4)-(N-acetyl-beta-glucosaminyl)asparagine amidase (PNG1) of Debaryomyces hansenii (strain ATCC 36239 / CBS 767 / BCRC 21394 / JCM 1990 / NBRC 0083 / IGC 2968) (Yeast).